A 323-amino-acid polypeptide reads, in one-letter code: Fructose-1,6-bisphosphatase class 1 (323 aa).

Residues E88, D107, L109, and D110 each contribute to the Mg(2+) site. Residues D110–S113 and N200 contribute to the substrate site. E272 contacts Mg(2+).

This sequence belongs to the FBPase class 1 family. In terms of assembly, homotetramer. Mg(2+) serves as cofactor.

The protein localises to the cytoplasm. The catalysed reaction is beta-D-fructose 1,6-bisphosphate + H2O = beta-D-fructose 6-phosphate + phosphate. The protein operates within carbohydrate biosynthesis; gluconeogenesis. The sequence is that of Fructose-1,6-bisphosphatase class 1 from Acinetobacter baumannii (strain ATCC 17978 / DSM 105126 / CIP 53.77 / LMG 1025 / NCDC KC755 / 5377).